Here is a 388-residue protein sequence, read N- to C-terminus: P2X purinoceptor 4 (388 aa).

At Met-1 to Arg-33 the chain is on the cytoplasmic side. Residues Thr-34–Tyr-54 traverse the membrane as a helical segment. The Extracellular segment spans residues Gln-55–Asn-338. Lys-67 and Lys-69 together coordinate ATP. Residues Lys-67 and Lys-69 each contribute to the CTP site. Asn-75, Asn-110, Asn-131, Asn-153, and Asn-184 each carry an N-linked (GlcNAc...) asparagine glycan. Cystine bridges form between Cys-116-Cys-165, Cys-126-Cys-149, and Cys-132-Cys-159. Thr-186 and Leu-188 together coordinate ATP. Thr-186 contacts CTP. N-linked (GlcNAc...) asparagine glycans are attached at residues Asn-199 and Asn-208. 2 disulfides stabilise this stretch: Cys-217-Cys-227 and Cys-261-Cys-270. ATP contacts are provided by Asn-293, Arg-295, and Lys-313. CTP is bound by residues Asn-293, Arg-295, and Lys-313. A helical transmembrane segment spans residues Ile-339–Tyr-359. Residues Cys-360–Gln-388 lie on the Cytoplasmic side of the membrane.

This sequence belongs to the P2X receptor family. Functional P2RXs are organized as homomeric and heteromeric trimers. Forms heterotrimer with P2RX1. Interacts with P2RX7 (via C-terminus); this interaction is functional only in the presence of ATP. Forms heterotrimer with P2RX4; functional differences between homomeric P2RX4 and P2RX4/6 heterotrimer are minor. Interacts with AP1M2.

The protein localises to the cell membrane. It localises to the lysosome membrane. It carries out the reaction K(+)(in) = K(+)(out). The catalysed reaction is Na(+)(in) = Na(+)(out). It catalyses the reaction Ca(2+)(in) = Ca(2+)(out). Its activity is regulated as follows. Activated by ATP. pH-dependent and inhibited by acidic pH. In terms of biological role, ATP-gated nonselective transmembrane cation channel permeable to potassium, sodium and calcium. CTP, but not GTP or UTP, functions as a weak affinity agonist for P2RX4. Activated by extracellularly released ATP, it plays multiple role in immunity and central nervous system physiology. Could also function as an ATP-gated cation channel of lysosomal membranes. The chain is P2X purinoceptor 4 (P2RX4) from Bos taurus (Bovine).